Consider the following 405-residue polypeptide: Homocitrate synthase AksA (405 aa).

The region spanning 23-274 (IEICDVTLRD…IERYDTTKLT (252 aa)) is the Pyruvate carboxyltransferase domain.

Belongs to the alpha-IPM synthase/homocitrate synthase family.

It catalyses the reaction acetyl-CoA + 2-oxoglutarate + H2O = (2R)-homocitrate + CoA + H(+). The enzyme catalyses 2-oxoadipate + acetyl-CoA + H2O = (R)-dihomocitrate + CoA + H(+). It carries out the reaction 2-oxoheptanedioate + acetyl-CoA + H2O = (R)-trihomocitrate + CoA + H(+). Its pathway is organic acid metabolism; 2-oxosuberate biosynthesis. Functionally, catalyzes the condensation of alpha-ketoglutarate and acetyl-CoA to form (R)-homocitrate. Can also catalyze the condensation of alpha-ketoadipate with acetyl-CoA to form (R)-homo(2)citrate, and the condensation of alpha-ketopimelate with acetyl-CoA to form (R)-homo(3)citrate. These reactions are part of the biosynthesis pathway of coenzyme B and biotin. This is Homocitrate synthase AksA (aksA) from Methanosarcina acetivorans (strain ATCC 35395 / DSM 2834 / JCM 12185 / C2A).